Consider the following 119-residue polypeptide: Protein YdaY (119 aa).

This Escherichia coli (strain K12) protein is Protein YdaY (ydaY).